We begin with the raw amino-acid sequence, 500 residues long: Xylan O-acetyltransferase 2 (500 aa).

Topologically, residues 1–25 (MGLPGRRNPLLSARRAAASLRRSRR) are cytoplasmic. The chain crosses the membrane as a helical; Signal-anchor for type II membrane protein span at residues 26-43 (LPVYVAAVFFVASVLLMF). Over 44 to 500 (RDEILYLTTA…RPPAAAGHVA (457 aa)) the chain is Lumenal. A disordered region spans residues 84–116 (PVLLGHGGKPEKHHSVTERHRPKVSAKRRPNKK). A compositionally biased stretch (basic and acidic residues) spans 91–102 (GKPEKHHSVTER). Residues 103–116 (HRPKVSAKRRPNKK) are compositionally biased toward basic residues. 4 cysteine pairs are disulfide-bonded: C143-C194, C165-C231, C174-C472, and C388-C468. N144 and N154 each carry an N-linked (GlcNAc...) asparagine glycan. The short motif at 218 to 220 (GDS) is the GDS motif element. S220 functions as the Nucleophile in the catalytic mechanism. 2 N-linked (GlcNAc...) asparagine glycosylation sites follow: N260 and N416. D467 (proton donor) is an active-site residue. A DXXH motif motif is present at residues 467–470 (DCIH). Catalysis depends on H470, which acts as the Proton acceptor.

This sequence belongs to the PC-esterase family. TBL subfamily. As to expression, expressed at low levels in roots and leaves.

Its subcellular location is the golgi apparatus membrane. Its function is as follows. Xylan acetyltransferase required for 2-O- and 3-O-monoacetylation of xylosyl residues in xylan. Catalyzes the 2-O-acetylation of xylan, followed by nonenzymatic acetyl migration to the O-3 position, resulting in products that are monoacetylated at both O-2 and O-3 positions. The polypeptide is Xylan O-acetyltransferase 2 (Oryza sativa subsp. japonica (Rice)).